The primary structure comprises 336 residues: NADH-quinone oxidoreductase subunit H (336 aa).

Transmembrane regions (helical) follow at residues 9–29, 77–97, 116–136, 156–176, 188–208, 236–256, 275–295, and 315–335; these read LVWIVLLAIVLILCVAYLTYA, FLFAPVIIFVLALVGWAVIPF, LGVMYLLGVAALEVYGTIIAG, ISYEIVIAPVVMTVILLTGSL, LPYWVDILMLPMTFIFFVSIL, IPFALFFLGEYANMILSSSIM, IVPGFIWFILKIVFVLFCFLI, and VFLPVTLLWIVVIGGLVAFNI.

Belongs to the complex I subunit 1 family. NDH-1 is composed of 14 different subunits. Subunits NuoA, H, J, K, L, M, N constitute the membrane sector of the complex.

The protein resides in the cell inner membrane. It carries out the reaction a quinone + NADH + 5 H(+)(in) = a quinol + NAD(+) + 4 H(+)(out). Its function is as follows. NDH-1 shuttles electrons from NADH, via FMN and iron-sulfur (Fe-S) centers, to quinones in the respiratory chain. The immediate electron acceptor for the enzyme in this species is believed to be ubiquinone. Couples the redox reaction to proton translocation (for every two electrons transferred, four hydrogen ions are translocated across the cytoplasmic membrane), and thus conserves the redox energy in a proton gradient. This subunit may bind ubiquinone. The chain is NADH-quinone oxidoreductase subunit H from Neorickettsia sennetsu (strain ATCC VR-367 / Miyayama) (Ehrlichia sennetsu).